Reading from the N-terminus, the 309-residue chain is Mitochondrial phosphate carrier protein 1, mitochondrial (309 aa).

Topologically, residues 1–15 (MTRVKSKLDEELSSP) are mitochondrial intermembrane. Residues 16–36 (WFYTVCTMGGMLSAGTTHLAI) traverse the membrane as a helical segment. 3 Solcar repeats span residues 16–100 (WFYT…FKTL), 109–193 (NRTS…SVEF), and 210–289 (QQLG…IKVL). The Mitochondrial matrix segment spans residues 37 to 74 (TPLDVLKVNMQVNPVKYNSIPSGFSTLLREHGHSYLWR). Residues 75–94 (GWSGKLLGYGVQGGCRFGLY) form a helical membrane-spanning segment. The Mitochondrial intermembrane segment spans residues 95 to 111 (EYFKTLYSDVLPNHNRT). The chain crosses the membrane as a helical span at residues 112–132 (SIYFLSSASAQIFADMALCPF). The Mitochondrial matrix segment spans residues 133–167 (EAIKVRVQTQPMFAKGLLDGFPRVYRSEGLAGFHR). Residues 168-187 (GLFPLWCRNLPFSMVMFSTF) form a helical membrane-spanning segment. Residues 188-208 (EQSVEFIYQKIIQKRKQDCSK) are Mitochondrial intermembrane-facing. A helical transmembrane segment spans residues 209–229 (AQQLGVTCLAGYTAGAVGTII). Over 230–268 (SNPADVVLSSLYNNKAKNVLQAVRNIGFVGLFTRSLPVR) the chain is Mitochondrial matrix. Residues 269–289 (ITIVGPVITLQWFFYDAIKVL) form a helical membrane-spanning segment. Residues 290 to 309 (SGFPTSGGVKKPVDAAKLSV) are Mitochondrial intermembrane-facing.

The protein belongs to the mitochondrial carrier (TC 2.A.29) family. In terms of tissue distribution, expressed in stems, leaves and flowers. Strong expression in the stamens of flowers.

The protein localises to the mitochondrion inner membrane. Its function is as follows. Transport of phosphate groups from the cytosol to the mitochondrial matrix. Mediates salt stress tolerance through an ATP-dependent pathway and via modulation of the gibberellin metabolism. This Arabidopsis thaliana (Mouse-ear cress) protein is Mitochondrial phosphate carrier protein 1, mitochondrial (MPT1).